A 142-amino-acid chain; its full sequence is PDZ domain-containing protein 11 (142 aa).

The 83-residue stretch at 49–131 (TIVLKKPPGA…ILMKVRYFPY (83 aa)) folds into the PDZ domain.

Its subcellular location is the cytoplasm. This Danio rerio (Zebrafish) protein is PDZ domain-containing protein 11 (pdzd11).